The sequence spans 444 residues: Lycopaoctaene synthase (444 aa).

The NADP(+) site is built by Arg-48 and Arg-73. Mg(2+) contacts are provided by Asp-76, Glu-79, and Asp-80. NADP(+) is bound by residues Arg-215, Lys-315, and Arg-317. Helical transmembrane passes span 391–411 (TAMVLAGALLIAALAYFAYVY) and 415–435 (GTSLKALPLFGVVIILAIGLF).

Belongs to the phytoene/squalene synthase family. Requires Mg(2+) as cofactor.

Its subcellular location is the membrane. The enzyme catalyses 2 (2E,6E)-farnesyl diphosphate + NADH + H(+) = squalene + 2 diphosphate + NAD(+). It catalyses the reaction 2 (2E,6E)-farnesyl diphosphate + NADPH + H(+) = squalene + 2 diphosphate + NADP(+). It carries out the reaction 2 (2E,6E,10E)-geranylgeranyl diphosphate + NADPH + H(+) = all-trans-lycopaoctaene + 2 diphosphate + NADP(+). Converts the C20 geranylgeranyl diphosphate (GGPP) to the C40 lycopaoctaene, the first committed intermediate in the production of lycopadiene. Converts farnesyl diphosphate (FPP) into squalene, a precursor for sterol biosynthesis in eukaryotes. Converts with low efficiency the C20 phytyl diphosphate (PPP) to the C40 lycopadiene in vitro. This reaction may not have biological significance in vivo. The chain is Lycopaoctaene synthase from Botryococcus braunii (Green alga).